Here is a 397-residue protein sequence, read N- to C-terminus: Serpin B10 (397 aa).

Residues 74-77 (KKRK) carry the Nuclear localization signal motif.

The protein belongs to the serpin family. Ov-serpin subfamily.

The protein resides in the nucleus. The protein localises to the cytoplasm. Functionally, protease inhibitor that may play a role in the regulation of protease activities during hematopoiesis and apoptosis induced by TNF. May regulate protease activities in the cytoplasm and in the nucleus. This Bos taurus (Bovine) protein is Serpin B10 (SERPINB10).